We begin with the raw amino-acid sequence, 162 residues long: Caveolin-2 (162 aa).

Over 1 to 86 the chain is Cytoplasmic; the sequence is MGLETEKADV…FEISKYVMYK (86 aa). Tyrosine 19 is modified (phosphotyrosine; by SRC). Residues serine 20 and serine 23 each carry the phosphoserine modification. The residue at position 27 (tyrosine 27) is a Phosphotyrosine; by SRC. The residue at position 36 (serine 36) is a Phosphoserine. The helical intramembrane region spans 87 to 107; that stretch reads FLTVFLAIPLAFIAGILFATL. Over 108–162 the chain is Cytoplasmic; sequence SCLHIWILMPFVKTCLMVLPSVQTIWKSVTDVFIAPLCTSVGRSFSSVSLQLSQD.

It belongs to the caveolin family. As to quaternary structure, monomer or homodimer. Interacts with CAV1; the interaction forms a stable heterooligomeric complex that is required for targeting to lipid rafts and for caveolae formation. Tyrosine phosphorylated forms do not form heterooligomers with the Tyr-19-phosphorylated form existing as a monomer or dimer, and the Tyr-27-form as a monomer only. Interacts (tyrosine phosphorylated form) with the SH2 domain-containing proteins, RASA1, NCK1 and SRC. Interacts (tyrosine phosphorylated form) with INSR, the interaction (Tyr-27-phosphorylated form) is increased on insulin stimulation. Interacts (Tyr-19 phosphorylated form) with MAPK1 (phosphorylated form); the interaction, promoted by insulin, leads to nuclear location and MAPK1 activation. Interacts with STAT3; the interaction is increased on insulin-induced tyrosine phosphorylation leading to STAT activation. Post-translationally, phosphorylated on serine and tyrosine residues. CAV1 promotes phosphorylation on Ser-23 which then targets the complex to the plasma membrane, lipid rafts and caveolae. Phosphorylation on Ser-36 appears to modulate mitosis in endothelial cells. Phosphorylation on both Tyr-19 and Tyr-27 is required for insulin-induced 'Ser-727' phosphorylation of STAT3 and its activation. Phosphorylation on Tyr-19 is required for insulin-induced phosphorylation of MAPK1 and DNA binding of STAT3. Tyrosine phosphorylation is induced by both EGF and insulin (By. similarity).

It localises to the nucleus. The protein localises to the cytoplasm. The protein resides in the golgi apparatus membrane. Its subcellular location is the cell membrane. It is found in the membrane. It localises to the caveola. Functionally, may act as a scaffolding protein within caveolar membranes. Interacts directly with G-protein alpha subunits and can functionally regulate their activity. Acts as an accessory protein in conjunction with CAV1 in targeting to lipid rafts and driving caveolae formation. The Ser-36 phosphorylated form has a role in modulating mitosis in endothelial cells. Positive regulator of cellular mitogenesis of the MAPK signaling pathway. Required for the insulin-stimulated nuclear translocation and activation of MAPK1 and STAT3, and the subsequent regulation of cell cycle progression. This chain is Caveolin-2 (CAV2), found in Chlorocebus aethiops (Green monkey).